Here is a 493-residue protein sequence, read N- to C-terminus: Activin receptor type-1C (493 aa).

The N-terminal stretch at 1–20 (MTRALCSALRQALLLLAAAA) is a signal peptide. Over 22-113 (LSPGLKCVCL…PNAPKLGPME (92 aa)) the chain is Extracellular. Residues 114–134 (LAIIITVPVCLLSIAAMLTVW) traverse the membrane as a helical segment. Residues 135-493 (ACQGRQCSYR…QLCVKEDCKA (359 aa)) are Cytoplasmic-facing. One can recognise a GS domain in the interval 165–194 (KTLKDLIYDVTASGSGSGLPLLVQRTIART). Residues 195–485 (IVLQEIVGKG…LRIKKTISQL (291 aa)) enclose the Protein kinase domain. ATP-binding positions include 201–209 (VGKGRFGEV) and Lys222. The active-site Proton acceptor is the Asp323.

Belongs to the protein kinase superfamily. TKL Ser/Thr protein kinase family. TGFB receptor subfamily. In terms of assembly, binds the type 2 receptor protein ACVR2A. Mg(2+) is required as a cofactor. The cofactor is Mn(2+). As to expression, present in pancreas, heart, colon, small intestine, ovary and the hippocampus, medulla oblongata and putamen of the brain. Isoform 1, isoform 2, isoform 3 and isoform 4 are all expressed in the placenta throughout pregnancy.

Its subcellular location is the membrane. The catalysed reaction is L-threonyl-[receptor-protein] + ATP = O-phospho-L-threonyl-[receptor-protein] + ADP + H(+). It carries out the reaction L-seryl-[receptor-protein] + ATP = O-phospho-L-seryl-[receptor-protein] + ADP + H(+). Serine/threonine protein kinase which forms a receptor complex on ligand binding. The receptor complex consists of 2 type II and 2 type I transmembrane serine/threonine kinases. Type II receptors phosphorylate and activate type I receptors which autophosphorylate, then bind and activate SMAD transcriptional regulators, SMAD2 and SMAD3. Receptor for activin AB, activin B, activin E and NODAL. Upon NODAL binding, activation results in increased apoptosis and reduced proliferation through suppression of AKT signaling and the activation of Smad2-dependent signaling pathway in pancreatic beta-cells, trophoblasts, epithelial or neuronal cells. Acts as a positive regulator for macrophage activation partially through down-regulation of PPARG expression. In Homo sapiens (Human), this protein is Activin receptor type-1C.